The chain runs to 288 residues: ATP synthase gamma chain (288 aa).

The protein belongs to the ATPase gamma chain family. In terms of assembly, F-type ATPases have 2 components, CF(1) - the catalytic core - and CF(0) - the membrane proton channel. CF(1) has five subunits: alpha(3), beta(3), gamma(1), delta(1), epsilon(1). CF(0) has three main subunits: a, b and c.

It localises to the cell inner membrane. Produces ATP from ADP in the presence of a proton gradient across the membrane. The gamma chain is believed to be important in regulating ATPase activity and the flow of protons through the CF(0) complex. The sequence is that of ATP synthase gamma chain from Aliivibrio fischeri (strain ATCC 700601 / ES114) (Vibrio fischeri).